A 289-amino-acid polypeptide reads, in one-letter code: MSTYLIGDIHGCLDELLALLAQVNFDPQQDTLWLTGDLVARGPASLDVLRYVRSLGPAVRMVLGNHDLHLLAVYAGISRNKPKDRITPLLDAPDADELINWLRRQPVLQVDDQLKLIMAHAGITPQWDIETAKMCAREVEAVLSSDSYPLFLDAMYGDMPNNWSPELTGLARLRFSTNALTRMRFCFPNGQLDMICKDTPENAPAPLKPWFDLPRLVDPEYSIIFGHWASLEGKGVPEGIYGLDTGCCWGGDLTLLRWDDKRYFTQRAFKAEAEINNNNGFAAGEAVQH.

It belongs to the Ap4A hydrolase family.

The enzyme catalyses P(1),P(4)-bis(5'-adenosyl) tetraphosphate + H2O = 2 ADP + 2 H(+). In terms of biological role, hydrolyzes diadenosine 5',5'''-P1,P4-tetraphosphate to yield ADP. The sequence is that of Bis(5'-nucleosyl)-tetraphosphatase, symmetrical from Yersinia pestis bv. Antiqua (strain Antiqua).